The following is a 163-amino-acid chain: Nucleotide-binding protein CGSHiGG_08790 (163 aa).

The protein belongs to the YajQ family.

Its function is as follows. Nucleotide-binding protein. This is Nucleotide-binding protein CGSHiGG_08790 from Haemophilus influenzae (strain PittGG).